The chain runs to 295 residues: 4-diphosphocytidyl-2-C-methyl-D-erythritol kinase (295 aa).

Residue Lys-15 is part of the active site. 101–111 (PIAAGLGGGSS) lines the ATP pocket. Asp-143 is a catalytic residue.

Belongs to the GHMP kinase family. IspE subfamily.

It catalyses the reaction 4-CDP-2-C-methyl-D-erythritol + ATP = 4-CDP-2-C-methyl-D-erythritol 2-phosphate + ADP + H(+). It participates in isoprenoid biosynthesis; isopentenyl diphosphate biosynthesis via DXP pathway; isopentenyl diphosphate from 1-deoxy-D-xylulose 5-phosphate: step 3/6. Its function is as follows. Catalyzes the phosphorylation of the position 2 hydroxy group of 4-diphosphocytidyl-2C-methyl-D-erythritol. The chain is 4-diphosphocytidyl-2-C-methyl-D-erythritol kinase from Caulobacter vibrioides (strain ATCC 19089 / CIP 103742 / CB 15) (Caulobacter crescentus).